We begin with the raw amino-acid sequence, 146 residues long: Hemoglobin subunit beta (146 aa).

At V1 the chain carries N-acetylvaline. Residues 2–146 form the Globin domain; that stretch reads HLTGEEKAAV…VANALAHKYH (145 aa). Residue T12 is modified to Phosphothreonine. Residue S44 is modified to Phosphoserine. K59 is subject to N6-acetyllysine. H63 is a heme b binding site. An N6-acetyllysine modification is found at K82. H92 contacts heme b. An S-nitrosocysteine modification is found at C93. N6-acetyllysine is present on K144.

This sequence belongs to the globin family. As to quaternary structure, heterotetramer of two alpha chains and two beta chains. As to expression, red blood cells.

In terms of biological role, involved in oxygen transport from the lung to the various peripheral tissues. This Ailurus fulgens (Himalayan red panda) protein is Hemoglobin subunit beta (HBB).